The sequence spans 138 residues: Transcription antitermination protein NusB (138 aa).

This sequence belongs to the NusB family.

Involved in transcription antitermination. Required for transcription of ribosomal RNA (rRNA) genes. Binds specifically to the boxA antiterminator sequence of the ribosomal RNA (rrn) operons. This Helicobacter pylori (strain Shi470) protein is Transcription antitermination protein NusB.